The sequence spans 181 residues: Type II secretion system protein H (181 aa).

Residues 1-5 constitute a propeptide, leader sequence; it reads MRQRG. Position 6 is an N-methylphenylalanine (F6). The helical transmembrane segment at 6 to 29 threads the bilayer; sequence FTLLEIMLVVLLAGVAATLVMMAI.

It belongs to the GSP H family. As to quaternary structure, type II secretion is composed of four main components: the outer membrane complex, the inner membrane complex, the cytoplasmic secretion ATPase and the periplasm-spanning pseudopilus. Interacts with core component OutG. Cleaved by prepilin peptidase. In terms of processing, methylated by prepilin peptidase at the amino group of the N-terminal phenylalanine once the leader sequence is cleaved by prepilin peptidase.

The protein resides in the cell inner membrane. In terms of biological role, component of the type II secretion system required for the energy-dependent secretion of extracellular factors such as proteases and toxins from the periplasm. Part of the pseudopilus tip complex that is critical for the recognition and binding of secretion substrates. In Dickeya chrysanthemi (Pectobacterium chrysanthemi), this protein is Type II secretion system protein H (outH).